The sequence spans 465 residues: Intraflagellar transport protein 54 (465 aa).

2 disordered regions span residues 119–301 and 347–366; these read VRSN…GFTM and LHGD…DKKP. A coiled-coil region spans residues 144–207; sequence LEALAREKAE…KQKQQQQQQQ (64 aa). The segment covering 146–198 has biased composition (basic and acidic residues); it reads ALAREKAEKERQRREQEQQERERKERERQEKEREEREKHELESRERAEAEQWK. A compositionally biased stretch (low complexity) spans 199–220; it reads QKQQQQQQQQQSAISPQKSPPK. The segment covering 222-242 has biased composition (basic and acidic residues); that stretch reads RFADDDKTRVEEHQPVIERPH.

It belongs to the TRAF3IP1 family.

The protein resides in the cell projection. It is found in the cilium. Its subcellular location is the flagellum. It localises to the cytoplasm. The protein localises to the cytoskeleton. The protein resides in the flagellum axoneme. It is found in the flagellum basal body. Its function is as follows. Component of the intraflagellar transport complex B (IFT-B) involved in flagellar assembly. The protein is Intraflagellar transport protein 54 of Giardia intestinalis (strain ATCC 50803 / WB clone C6) (Giardia lamblia).